The sequence spans 31 residues: Cytochrome b6-f complex subunit 6 (31 aa).

The chain crosses the membrane as a helical span at residues 3–23 (TIISYFGFLLASIIFTLILFI).

The protein belongs to the PetL family. As to quaternary structure, the 4 large subunits of the cytochrome b6-f complex are cytochrome b6, subunit IV (17 kDa polypeptide, PetD), cytochrome f and the Rieske protein, while the 4 small subunits are PetG, PetL, PetM and PetN. The complex functions as a dimer.

The protein localises to the plastid. It localises to the chloroplast thylakoid membrane. Component of the cytochrome b6-f complex, which mediates electron transfer between photosystem II (PSII) and photosystem I (PSI), cyclic electron flow around PSI, and state transitions. PetL is important for photoautotrophic growth as well as for electron transfer efficiency and stability of the cytochrome b6-f complex. This Abies homolepis (Nikko fir) protein is Cytochrome b6-f complex subunit 6.